The chain runs to 132 residues: Lectin OAA (132 aa).

2 consecutive repeat copies span residues 1–66 (ALYN…TLLG) and 67–132 (NNSY…GTTL). Positions 1–132 (ALYNVENQWG…GPIGFKGTTL (132 aa)) are 2 X approximate tandem repeats.

As to quaternary structure, monomer.

In terms of biological role, lectin specific for high mannose N-glycans, recognizes the branched moiety of these glycans. Does not recognize other types of N-glycans or monosaccharides. Agglutinates trypsin-treated rabbit erythrocytes. Does not require divalent cations for activity. Inhibits HIV replication in MT4 cells with an EC(50) of 45 nM. Binds to the HIV envelope glycoprotein gp120. The polypeptide is Lectin OAA (Planktothrix agardhii (Oscillatoria agardhii)).